Consider the following 119-residue polypeptide: Beta-2-microglobulin (119 aa).

Positions 1-20 (MARFVAVALLVLLSLSGLEA) are cleaved as a signal peptide. In terms of domain architecture, Ig-like C1-type spans 25–114 (PKIQVYSRHP…VTFSTPKTVK (90 aa)). Residues cysteine 45 and cysteine 100 are joined by a disulfide bond.

It belongs to the beta-2-microglobulin family. Heterodimer of an alpha chain and a beta chain. Beta-2-microglobulin is the beta-chain of major histocompatibility complex class I molecules.

It localises to the secreted. Functionally, component of the class I major histocompatibility complex (MHC). Involved in the presentation of peptide antigens to the immune system. This chain is Beta-2-microglobulin (B2M), found in Plecturocebus moloch (Dusky titi monkey).